A 208-amino-acid polypeptide reads, in one-letter code: Small ribosomal subunit protein uS4 (208 aa).

The 64-residue stretch at Arg-98–Gln-161 folds into the S4 RNA-binding domain.

Belongs to the universal ribosomal protein uS4 family. In terms of assembly, part of the 30S ribosomal subunit. Contacts protein S5. The interaction surface between S4 and S5 is involved in control of translational fidelity.

One of the primary rRNA binding proteins, it binds directly to 16S rRNA where it nucleates assembly of the body of the 30S subunit. In terms of biological role, with S5 and S12 plays an important role in translational accuracy. The polypeptide is Small ribosomal subunit protein uS4 (Desulfovibrio desulfuricans (strain ATCC 27774 / DSM 6949 / MB)).